The sequence spans 218 residues: UPF0502 protein Geob_1184 (218 aa).

Belongs to the UPF0502 family.

The polypeptide is UPF0502 protein Geob_1184 (Geotalea daltonii (strain DSM 22248 / JCM 15807 / FRC-32) (Geobacter daltonii)).